The following is a 635-amino-acid chain: MIAITLPDGSRREFPGPVTVAEVAQSIGTGLAKAALAGKVDGNLVDTSYSIDRDVALAIITDKDADGVDVIRHSTAHLLAYAVKELYPDAQVTIGPVIENGFYYDFAYKRPFTPEDLAAIEKKMTELSRKDEKVTREVWNRDEAVALFESMGEKYKAEIIASIPADQEIGLYREGKFVDLCRGPHVPSTGKLKVFKLMKVAGAYWRGDANNEMLQRIYGTAWAKKEDQEAYLHMLEEAEKRDHRKLGKSLDLFHLQEEAPGMVFWHPKGWQVWQAVEQYMRGRLTAAGYDEVRTPQVMDRSLWEKSGHWQNYKENMFVTESEKRDYAIKPMNCPGHVQIFNHGLRSYRDLPLRLAEFGACHRNEPSGALHGLMRVRGFVQDDAHIFCTEEQIVAEAKAFNELAFSVYDDFGFKDVAVKLSLRPAQRAGSDEVWDHAEEGLRLALRACGVDWEELPGEGAFYGPKVEYHIKDAIGRSWQCGTLQLDLVLPERLGAEYVAEDNSRKRPVMLHRAILGSFERFLGILLENHAGALPAWLAPEQVVVMNIAESQAEYAENVVQSLLKQGFRAKADLRNEKITYKIREHSLQKIPYLLVVGDKERDANQVAVRARGNVDLGVMPVSAFVERLQQDVTNKA.

The TGS domain occupies 1–61; that stretch reads MIAITLPDGS…DRDVALAIIT (61 aa). The interval 242–533 is catalytic; sequence DHRKLGKSLD…LLENHAGALP (292 aa). Zn(2+) is bound by residues C333, H384, and H510.

The protein belongs to the class-II aminoacyl-tRNA synthetase family. Homodimer. Zn(2+) serves as cofactor.

The protein localises to the cytoplasm. It catalyses the reaction tRNA(Thr) + L-threonine + ATP = L-threonyl-tRNA(Thr) + AMP + diphosphate + H(+). Functionally, catalyzes the attachment of threonine to tRNA(Thr) in a two-step reaction: L-threonine is first activated by ATP to form Thr-AMP and then transferred to the acceptor end of tRNA(Thr). Also edits incorrectly charged L-seryl-tRNA(Thr). This is Threonine--tRNA ligase from Cupriavidus pinatubonensis (strain JMP 134 / LMG 1197) (Cupriavidus necator (strain JMP 134)).